The sequence spans 277 residues: 3-methyl-2-oxobutanoate hydroxymethyltransferase (277 aa).

Mg(2+) contacts are provided by Asp-43 and Asp-82. 3-methyl-2-oxobutanoate is bound by residues 43–44, Asp-82, and Lys-112; that span reads DS. Residue Glu-114 participates in Mg(2+) binding. Residue Glu-181 is the Proton acceptor of the active site.

The protein belongs to the PanB family. Homodecamer; pentamer of dimers. Requires Mg(2+) as cofactor.

It is found in the cytoplasm. The enzyme catalyses 3-methyl-2-oxobutanoate + (6R)-5,10-methylene-5,6,7,8-tetrahydrofolate + H2O = 2-dehydropantoate + (6S)-5,6,7,8-tetrahydrofolate. Its pathway is cofactor biosynthesis; (R)-pantothenate biosynthesis; (R)-pantoate from 3-methyl-2-oxobutanoate: step 1/2. Its function is as follows. Catalyzes the reversible reaction in which hydroxymethyl group from 5,10-methylenetetrahydrofolate is transferred onto alpha-ketoisovalerate to form ketopantoate. This is 3-methyl-2-oxobutanoate hydroxymethyltransferase from Listeria monocytogenes serotype 4b (strain CLIP80459).